The chain runs to 358 residues: Putative KilA-N domain-containing protein 313L (358 aa).

In terms of domain architecture, KilA-N spans N15–F124. Positions V126–R245 form a coiled coil.

Belongs to the IIV-6 006L/238R/313L/468L family.

The protein is Putative KilA-N domain-containing protein 313L of Acheta domesticus (House cricket).